We begin with the raw amino-acid sequence, 843 residues long: Eisosome protein 1 (843 aa).

The residue at position 2 (Ser-2) is an N-acetylserine. Ser-2 carries the phosphoserine modification. The tract at residues 13–44 (HNIGKTSGGGSRTSSITSSKKSLKHGSKSLRK) is disordered. A compositionally biased stretch (basic residues) spans 33–44 (KSLKHGSKSLRK). Ser-88 and Ser-130 each carry phosphoserine. The interval 120–174 (KMGPKVVRNNSITSATSKTSKESQTKRKSKESPGAAASKAYSMTMETTSLSSQTN) is disordered. Polar residues-rich tracts occupy residues 127–137 (RNNSITSATSK) and 163–174 (TMETTSLSSQTN). A phosphoserine mark is found at Ser-182, Ser-401, Ser-584, and Ser-710. Positions 717 to 843 (DLPTQLEKIE…QDAISNQEKK (127 aa)) are disordered. Phosphothreonine is present on Thr-720. The span at 752-764 (STAAKEATETSSA) shows a compositional bias: low complexity. 2 positions are modified to phosphoserine: Ser-763 and Ser-775. Over residues 781 to 797 (SGKEDANDCKSAEHSKE) the composition is skewed to basic and acidic residues. Residues 798-810 (ISVSQKAGNNKSL) show a composition bias toward polar residues. Phosphoserine occurs at positions 816, 828, 829, and 838.

This sequence belongs to the EIS1 family.

The protein resides in the cytoplasmic granule. The protein localises to the cell membrane. Functionally, required for normal formation of eisosomes, large cytoplasmic protein assemblies that localize to specialized domains on plasma membrane and mark the site of endocytosis. This is Eisosome protein 1 (EIS1) from Saccharomyces cerevisiae (strain RM11-1a) (Baker's yeast).